The primary structure comprises 369 residues: Maltose/maltodextrin import ATP-binding protein MalK (369 aa).

Positions 4–234 constitute an ABC transporter domain; that stretch reads VTLSSVYKAF…PANRFVAGFI (231 aa). 36–43 lines the ATP pocket; it reads GPSGCGKS.

Belongs to the ABC transporter superfamily. Maltooligosaccharide importer (TC 3.A.1.1.1) family. As to quaternary structure, the complex is composed of two ATP-binding proteins (MalK), two transmembrane proteins (MalG and MalK) and a solute-binding protein (MalE).

The protein localises to the cell inner membrane. The enzyme catalyses D-maltose(out) + ATP + H2O = D-maltose(in) + ADP + phosphate + H(+). Part of the ABC transporter complex MalEFGK involved in maltose/maltodextrin import. Responsible for energy coupling to the transport system. The sequence is that of Maltose/maltodextrin import ATP-binding protein MalK from Yersinia pestis bv. Antiqua (strain Antiqua).